A 182-amino-acid chain; its full sequence is Fatty-acid and retinol-binding protein 1 (182 aa).

Positions 1 to 17 (MIRATIILAAVAALAFS) are cleaved as a signal peptide. Residues 86–106 (EKASKLHQIVKDKVNALNDEA) adopt a coiled-coil conformation.

Belongs to the fatty-acid and retinol-binding protein (FARBP) family.

The protein resides in the secreted. In terms of biological role, probably binds lipids. In Caenorhabditis elegans, this protein is Fatty-acid and retinol-binding protein 1 (far-1).